A 566-amino-acid chain; its full sequence is Oxygen-dependent choline dehydrogenase (566 aa).

FAD is bound at residue aspartate 7 to glutamate 36. Positions asparagine 180–threonine 203 are disordered. Histidine 474 serves as the catalytic Proton acceptor.

This sequence belongs to the GMC oxidoreductase family. FAD serves as cofactor.

It carries out the reaction choline + A = betaine aldehyde + AH2. It catalyses the reaction betaine aldehyde + NAD(+) + H2O = glycine betaine + NADH + 2 H(+). Its pathway is amine and polyamine biosynthesis; betaine biosynthesis via choline pathway; betaine aldehyde from choline (cytochrome c reductase route): step 1/1. Functionally, involved in the biosynthesis of the osmoprotectant glycine betaine. Catalyzes the oxidation of choline to betaine aldehyde and betaine aldehyde to glycine betaine at the same rate. The sequence is that of Oxygen-dependent choline dehydrogenase from Burkholderia ambifaria (strain MC40-6).